Consider the following 531-residue polypeptide: T-complex protein 1 subunit zeta (531 aa).

An N-acetylalanine modification is found at Ala-2. Lys-5 is modified (N6-acetyllysine). Gly-39 lines the ADP pocket. Gly-39 lines the ATP pocket. Asp-90 lines the Mg(2+) pocket. 6 residues coordinate ADP: Gly-91, Thr-92, Thr-93, Ser-94, Thr-158, and Lys-159. ATP is bound by residues Gly-91, Thr-92, and Thr-93. N6-acetyllysine is present on Lys-199. At Ser-205 the chain carries Phosphoserine. A Glycyl lysine isopeptide (Lys-Gly) (interchain with G-Cter in SUMO2) cross-link involves residue Lys-251. Lys-287, Lys-365, Lys-377, and Lys-388 each carry N6-acetyllysine. Ala-411 provides a ligand contact to ADP. Ala-411, Gly-412, Asp-496, and Lys-501 together coordinate ATP. Asp-496 is a binding site for ADP.

It belongs to the TCP-1 chaperonin family. Component of the chaperonin-containing T-complex (TRiC), a hexadecamer composed of two identical back-to-back stacked rings enclosing a protein folding chamber. Each ring is made up of eight different subunits: TCP1/CCT1, CCT2, CCT3, CCT4, CCT5, CCT6A/CCT6, CCT7, CCT8. Interacts with PACRG.

It is found in the cytoplasm. It carries out the reaction ATP + H2O = ADP + phosphate + H(+). In terms of biological role, component of the chaperonin-containing T-complex (TRiC), a molecular chaperone complex that assists the folding of actin, tubulin and other proteins upon ATP hydrolysis. The TRiC complex mediates the folding of WRAP53/TCAB1, thereby regulating telomere maintenance. In Pongo abelii (Sumatran orangutan), this protein is T-complex protein 1 subunit zeta (CCT6).